Here is a 237-residue protein sequence, read N- to C-terminus: Ribonuclease PH (237 aa).

Residues R86 and 124 to 126 (GTR) each bind phosphate.

It belongs to the RNase PH family. In terms of assembly, homohexameric ring arranged as a trimer of dimers.

The catalysed reaction is tRNA(n+1) + phosphate = tRNA(n) + a ribonucleoside 5'-diphosphate. Phosphorolytic 3'-5' exoribonuclease that plays an important role in tRNA 3'-end maturation. Removes nucleotide residues following the 3'-CCA terminus of tRNAs; can also add nucleotides to the ends of RNA molecules by using nucleoside diphosphates as substrates, but this may not be physiologically important. Probably plays a role in initiation of 16S rRNA degradation (leading to ribosome degradation) during starvation. The protein is Ribonuclease PH of Roseobacter denitrificans (strain ATCC 33942 / OCh 114) (Erythrobacter sp. (strain OCh 114)).